Here is a 353-residue protein sequence, read N- to C-terminus: Phosphoribosylformylglycinamidine cyclo-ligase (353 aa).

This sequence belongs to the AIR synthase family.

Its subcellular location is the cytoplasm. It catalyses the reaction 2-formamido-N(1)-(5-O-phospho-beta-D-ribosyl)acetamidine + ATP = 5-amino-1-(5-phospho-beta-D-ribosyl)imidazole + ADP + phosphate + H(+). It functions in the pathway purine metabolism; IMP biosynthesis via de novo pathway; 5-amino-1-(5-phospho-D-ribosyl)imidazole from N(2)-formyl-N(1)-(5-phospho-D-ribosyl)glycinamide: step 2/2. The sequence is that of Phosphoribosylformylglycinamidine cyclo-ligase from Dinoroseobacter shibae (strain DSM 16493 / NCIMB 14021 / DFL 12).